The sequence spans 343 residues: UDP-glucuronic acid decarboxylase 6 (343 aa).

Positions 1–22 (MASNSSNGTTTTKPPPMPSPLR) are disordered. Residue Ala-2 is modified to N-acetylalanine. An NAD(+)-binding site is contributed by 62–87 (DNYFTGSKDNLKKWIGHPRFELIRHD). Position 171 (Arg-171) interacts with substrate. Catalysis depends on Tyr-174, which acts as the Proton acceptor. 174–178 (YDEGK) contributes to the NAD(+) binding site. Asn-203 serves as a coordination point for substrate. Arg-215 provides a ligand contact to NAD(+). Substrate is bound by residues 216–220 (VVSNF), 233–240 (QKPGTQTR), and 300–304 (DPRQR).

This sequence belongs to the NAD(P)-dependent epimerase/dehydratase family. UDP-glucuronic acid decarboxylase subfamily. It depends on NAD(+) as a cofactor.

Its subcellular location is the cytoplasm. It carries out the reaction UDP-alpha-D-glucuronate + H(+) = UDP-alpha-D-xylose + CO2. Its pathway is nucleotide-sugar biosynthesis; UDP-alpha-D-xylose biosynthesis; UDP-alpha-D-xylose from UDP-alpha-D-glucuronate: step 1/1. Its function is as follows. Catalyzes the NAD-dependent decarboxylation of UDP-glucuronic acid to UDP-xylose. Necessary for the biosynthesis of the core tetrasaccharide in glycosaminoglycan biosynthesis. This is UDP-glucuronic acid decarboxylase 6 (UXS6) from Arabidopsis thaliana (Mouse-ear cress).